A 417-amino-acid polypeptide reads, in one-letter code: Carboxypeptidase B (417 aa).

The N-terminal stretch at 1–16 (MLAFLILVTVTLASAH) is a signal peptide. Residues 17–110 (HSGEHFEGDK…LEAQFDSRVR (94 aa)) constitute a propeptide, activation peptide. The Peptidase M14 domain occupies 118–412 (KYNNWETIEA…LAIKYVTSYV (295 aa)). A disulfide bond links cysteine 173 and cysteine 186. The Zn(2+) site is built by histidine 176 and glutamate 179. Substrate contacts are provided by residues 176–179 (HARE), arginine 234, and 251–252 (NR). Disulfide bonds link cysteine 245–cysteine 268 and cysteine 259–cysteine 273. Residue histidine 304 coordinates Zn(2+). Substrate is bound by residues 305–306 (SY) and tyrosine 356. The active-site Proton donor/acceptor is glutamate 378.

It belongs to the peptidase M14 family. Requires Zn(2+) as cofactor.

It is found in the secreted. The protein localises to the zymogen granule lumen. The enzyme catalyses Preferential release of a C-terminal lysine or arginine amino acid.. The protein is Carboxypeptidase B (CPB1) of Bos taurus (Bovine).